A 163-amino-acid chain; its full sequence is Putative 4-hydroxy-4-methyl-2-oxoglutarate aldolase (163 aa).

Substrate is bound by residues 76 to 79 (GDML) and arginine 98. An a divalent metal cation-binding site is contributed by aspartate 99.

The protein belongs to the class II aldolase/RraA-like family. In terms of assembly, homotrimer. A divalent metal cation is required as a cofactor.

The enzyme catalyses 4-hydroxy-4-methyl-2-oxoglutarate = 2 pyruvate. It catalyses the reaction oxaloacetate + H(+) = pyruvate + CO2. Functionally, catalyzes the aldol cleavage of 4-hydroxy-4-methyl-2-oxoglutarate (HMG) into 2 molecules of pyruvate. Also contains a secondary oxaloacetate (OAA) decarboxylase activity due to the common pyruvate enolate transition state formed following C-C bond cleavage in the retro-aldol and decarboxylation reactions. The polypeptide is Putative 4-hydroxy-4-methyl-2-oxoglutarate aldolase (Pseudomonas putida (strain ATCC 47054 / DSM 6125 / CFBP 8728 / NCIMB 11950 / KT2440)).